The chain runs to 80 residues: MKVAVIFLLSALALLSLAGNTFSAKVTGKEASCHDAVAGCPRIYDPVCGTDGITYANECVLCFENRKRIEPVLIRKGGPC.

Residues Met1–Ser23 form the signal peptide. The region spanning Thr27–Cys80 is the Kazal-like domain. Cystine bridges form between Cys33–Cys62, Cys40–Cys59, and Cys48–Cys80.

As to expression, in the genital tract, expressed only in male accessory glands including seminal vesicle, coagulating gland and prostate.

It localises to the secreted. Serine protease inhibitor which exhibits anti-trypsin activity. In the pancreas, protects against trypsin-catalyzed premature activation of zymogens. Functionally, in the male reproductive tract, binds to sperm heads where it modulates sperm capacitance by inhibiting calcium uptake and nitrogen oxide (NO) production. This Mus musculus (Mouse) protein is Serine protease inhibitor Kazal-type 1.